Here is a 731-residue protein sequence, read N- to C-terminus: Penicillin-binding protein 2a (731 aa).

Topologically, residues methionine 1 to lysine 56 are cytoplasmic. A helical; Signal-anchor for type II membrane protein membrane pass occupies residues isoleucine 57–alanine 77. The hydrophobic; associated with cytoplasmic membrane. Required for transglycosylase activity, but not for lipid II binding stretch occupies residues lysine 78 to serine 156. Residues lysine 78–lysine 300 are transglycosylase. At lysine 78–arginine 731 the chain is on the extracellular side. Glutamate 131 serves as the catalytic Proton donor; for transglycosylase activity. Residues isoleucine 301–arginine 731 are transpeptidase. The Acyl-ester intermediate; for transpeptidase activity role is filled by serine 410. The tract at residues alanine 674–aspartate 694 is disordered. The span at threonine 676 to aspartate 690 shows a compositional bias: polar residues.

In the N-terminal section; belongs to the glycosyltransferase 51 family. The protein in the C-terminal section; belongs to the transpeptidase family. As to quaternary structure, homodimer. May also form higher order oligomers. Self-association may depend on its transmembrane and/or cytoplasmic regions. Interacts with MacP; interaction is required for the function of this protein.

Its subcellular location is the cell membrane. It localises to the secreted. The protein resides in the cell wall. The catalysed reaction is Preferential cleavage: (Ac)2-L-Lys-D-Ala-|-D-Ala. Also transpeptidation of peptidyl-alanyl moieties that are N-acyl substituents of D-alanine.. The enzyme catalyses [GlcNAc-(1-&gt;4)-Mur2Ac(oyl-L-Ala-gamma-D-Glu-L-Lys-D-Ala-D-Ala)](n)-di-trans,octa-cis-undecaprenyl diphosphate + beta-D-GlcNAc-(1-&gt;4)-Mur2Ac(oyl-L-Ala-gamma-D-Glu-L-Lys-D-Ala-D-Ala)-di-trans,octa-cis-undecaprenyl diphosphate = [GlcNAc-(1-&gt;4)-Mur2Ac(oyl-L-Ala-gamma-D-Glu-L-Lys-D-Ala-D-Ala)](n+1)-di-trans,octa-cis-undecaprenyl diphosphate + di-trans,octa-cis-undecaprenyl diphosphate + H(+). The protein operates within cell wall biogenesis; peptidoglycan biosynthesis. In terms of biological role, cell wall formation. Synthesis of cross-linked peptidoglycan (PG) from the lipid intermediates. Binds dansylated lipid II and catalyzes the polymerization of glycan chains. Hydrolyzes S2d (N-benzoyl-D-alanylmercaptoacetic acid) molecule, a synthetic thiolester analog of cell wall stem peptide. Active against bocillin, a fluorescent penicillin. No transpeptidase activity with non-fluorescent lysine-containing lipid II as substrate. The sequence is that of Penicillin-binding protein 2a from Streptococcus pneumoniae serotype 2 (strain D39 / NCTC 7466).